We begin with the raw amino-acid sequence, 800 residues long: Nuclear cap-binding protein subunit 1 (800 aa).

Positions 1 to 26 (MSRRRAHDTEDEGYDHRRNKRRRVSE) are disordered. T9 carries the post-translational modification Phosphothreonine. Positions 31–243 (EDRLESLILR…CLWAQIRKLR (213 aa)) constitute an MIF4G domain. Residues 669-700 (LAKADSSSSDSEDDSSHKRKKPITHADKPSEE) are disordered.

This sequence belongs to the NCBP1 family. Component of the nuclear cap-binding complex (CBC), a heterodimer composed of Cbp80 and Cbp20 that interacts with m7GpppG-capped RNA.

The protein localises to the nucleus. In terms of biological role, component of the cap-binding complex (CBC), which binds cotranscriptionally to the 5'-cap of pre-mRNAs and is involved in various processes such as pre-mRNA splicing and RNA-mediated gene silencing (RNAi). The CBC complex is involved in miRNA-mediated RNA interference via its interaction with Ars2 and is required for primary microRNAs (miRNAs) processing. Also involved in innate immunity via the short interfering RNAs (siRNAs) processing machinery by restricting the viral RNA production. In the CBC complex, Cbp80 does not bind directly capped RNAs (m7GpppG-capped RNA) but is required to stabilize the movement of the N-terminal loop of Cbp20 and lock the CBC into a high affinity cap-binding state with the cap structure. The protein is Nuclear cap-binding protein subunit 1 (Cbp80) of Drosophila yakuba (Fruit fly).